The following is a 98-amino-acid chain: C-C motif chemokine 19 (98 aa).

Residues 1-21 (MALLLALSLLVLWTSPAPTLS) form the signal peptide. Cystine bridges form between Cys29/Cys55 and Cys30/Cys71.

It belongs to the intercrine beta (chemokine CC) family. As to quaternary structure, interacts with TNFAIP6 (via Link domain). Expressed at high levels in the lymph nodes, thymus and appendix. Intermediate levels seen in colon and trachea, while low levels found in spleen, small intestine, lung, kidney and stomach.

It is found in the secreted. In terms of biological role, may play a role not only in inflammatory and immunological responses but also in normal lymphocyte recirculation and homing. May play an important role in trafficking of T-cells in thymus, and T-cell and B-cell migration to secondary lymphoid organs. Binds to chemokine receptor CCR7. Recombinant CCL19 shows potent chemotactic activity for T-cells and B-cells but not for granulocytes and monocytes. Binds to atypical chemokine receptor ACKR4 and mediates the recruitment of beta-arrestin (ARRB1/2) to ACKR4. This Homo sapiens (Human) protein is C-C motif chemokine 19 (CCL19).